Reading from the N-terminus, the 442-residue chain is Matrix remodeling-associated protein 8 (442 aa).

An N-terminal signal peptide occupies residues 1-19 (MELLSRVLLWKLLLLQSSA). Over 20–340 (VLSSGPSGTA…PEDHTHFFQQ (321 aa)) the chain is Extracellular. 2 Ig-like V-type domains span residues 25–156 (PSGT…LEVT) and 159–291 (PLLS…LQVT). Intrachain disulfides connect Cys-53-Cys-136 and Cys-185-Cys-271. Residue Asn-118 is glycosylated (N-linked (GlcNAc...) asparagine). Positions 128 to 130 (RGD) match the RGD 1 motif. The residue at position 227 (Ser-227) is a Phosphoserine. The RGD 2 signature appears at 251–253 (RGD). A disordered region spans residues 296–319 (EPPARASPGNGSGHSSAPSPDPTL). Residue Asn-305 is glycosylated (N-linked (GlcNAc...) asparagine). The helical transmembrane segment at 341 to 361 (LGYVLATLLLFILLLITVVLA) threads the bilayer. Residues 362–442 (TRYRHSGGCK…DKEFRKEYCK (81 aa)) lie on the Cytoplasmic side of the membrane.

Homodimer in cis. Does not appear to form trans-homodimers. Interacts with ITGB3; the interaction inhibits ITGAV:ITGB3 heterodimer formation. As to expression, widely expressed (at protein level). Highly expressed in brain where it localizes to the glia limitans, which is formed by the endfeet of astrocytes surrounding capillaries, and beneath the pia mater (at protein level). In lung, detected in epithelial cells of the bronchus (at protein level). Expressed in intercalated disks in the heart (at protein level). Detected in pancreatic alpha-cells in the islet of Langerhans (at protein level). In kidney, found in the brush border of the proximal convoluted tubule (at protein level). Expressed in the epithelium of the small intestine (at protein level). Weakly expressed in liver (at protein level). Detected in myeloid cells.

The protein localises to the cell membrane. The protein resides in the cell junction. It is found in the tight junction. Its subcellular location is the cytoplasm. It localises to the cell projection. The protein localises to the cilium membrane. The protein resides in the nucleus. Its function is as follows. Transmembrane protein which can modulate activity of various signaling pathways, probably via binding to integrin ITGAV:ITGB3. Mediates heterophilic cell-cell interactions in vitro. Inhibits osteoclastogenesis downstream of TNFSF11/RANKL and CSF1, where it may function by attenuating signaling via integrin ITGB3 and MAP kinase p38. Plays a role in cartilage formation where it promotes proliferation and maturation of growth plate chondrocytes. Stimulates formation of primary cilia in chondrocytes. Enhances expression of genes involved in the hedgehog signaling pathway in chondrocytes, including the hedgehog signaling molecule IHH; may also promote signaling via the PTHLH/PTHrP pathway. Plays a role in angiogenesis where it suppresses migration of endothelial cells and also promotes their apoptosis. Inhibits VEGF-induced activation of AKT and p38 MAP kinase in endothelial cells. Also inhibits VTN (vitronectin)-mediated integrin ITGAV:ITGB3 signaling and activation of PTK2/FAK. May play a role in the maturation and maintenance of the blood-brain barrier. This chain is Matrix remodeling-associated protein 8, found in Mus musculus (Mouse).